The following is a 952-amino-acid chain: Probable outer membrane protein pmp16 (952 aa).

Positions 1-27 (MSKTPPKFLFYLGNFTACMFGMTPAVY) are cleaved as a signal peptide. An Autotransporter domain is found at 646–952 (GDLATTPLWQ…HLQAGSTLKF (307 aa)).

The protein belongs to the PMP outer membrane protein family.

It localises to the secreted. The protein localises to the cell wall. It is found in the cell outer membrane. The sequence is that of Probable outer membrane protein pmp16 (pmp16) from Chlamydia pneumoniae (Chlamydophila pneumoniae).